The sequence spans 378 residues: Erythronate-4-phosphate dehydrogenase (378 aa).

Residues Ser-45 and Thr-66 each contribute to the substrate site. NAD(+) is bound by residues Asp-146 and Thr-175. Residue Arg-208 is part of the active site. Position 232 (Asp-232) interacts with NAD(+). The active site involves Glu-237. His-254 serves as the catalytic Proton donor. Gly-257 provides a ligand contact to NAD(+). A substrate-binding site is contributed by Tyr-258.

Belongs to the D-isomer specific 2-hydroxyacid dehydrogenase family. PdxB subfamily. As to quaternary structure, homodimer.

The protein resides in the cytoplasm. It carries out the reaction 4-phospho-D-erythronate + NAD(+) = (R)-3-hydroxy-2-oxo-4-phosphooxybutanoate + NADH + H(+). It participates in cofactor biosynthesis; pyridoxine 5'-phosphate biosynthesis; pyridoxine 5'-phosphate from D-erythrose 4-phosphate: step 2/5. Functionally, catalyzes the oxidation of erythronate-4-phosphate to 3-hydroxy-2-oxo-4-phosphonooxybutanoate. This Shigella dysenteriae serotype 1 (strain Sd197) protein is Erythronate-4-phosphate dehydrogenase.